A 334-amino-acid chain; its full sequence is Putative ankyrin repeat protein RBE_0347 (334 aa).

ANK repeat units lie at residues 80 to 90 (EQGINPNIQDS), 91 to 120 (SGNT…NPNI), 124 to 161 (SDNT…LKDF), and 162 to 191 (VGFT…DINV).

The polypeptide is Putative ankyrin repeat protein RBE_0347 (Rickettsia bellii (strain RML369-C)).